Here is a 265-residue protein sequence, read N- to C-terminus: MLVHPQFDPVAIAVGPVAVRWYGLMYLLAFVLFVVLGRAHARRRPELGWNAQAIDDLLLYGVLGVIIGGRLGEVLFYQPGYYLSHPAEILAVWKGGMSFHGGFLGVLVAMWLYGQRSGRGFWQITDFIAPLVPTGLAAGRIGNFINGELWGRPASPDLPWAMIFPWVDALPRHPSQLYQAAGEGLLLFAIVWVFAAKPRPLRAVSAVFLIGYGSLRFVAEFFRTPDPGIFSDLVPGLSTAQWLCVPMVVVGLALLKHAAHARARG.

The next 7 helical transmembrane spans lie at 17–37, 57–77, 89–109, 127–147, 176–196, 201–218, and 233–253; these read VAVR…VVLG, LLLY…VLFY, ILAV…VLVA, FIAP…FING, QLYQ…VFAA, LRAV…LRFV, and LVPG…VGLA. Residue Arg140 participates in a 1,2-diacyl-sn-glycero-3-phospho-(1'-sn-glycerol) binding.

This sequence belongs to the Lgt family.

The protein resides in the cell inner membrane. It carries out the reaction L-cysteinyl-[prolipoprotein] + a 1,2-diacyl-sn-glycero-3-phospho-(1'-sn-glycerol) = an S-1,2-diacyl-sn-glyceryl-L-cysteinyl-[prolipoprotein] + sn-glycerol 1-phosphate + H(+). Its pathway is protein modification; lipoprotein biosynthesis (diacylglyceryl transfer). Catalyzes the transfer of the diacylglyceryl group from phosphatidylglycerol to the sulfhydryl group of the N-terminal cysteine of a prolipoprotein, the first step in the formation of mature lipoproteins. The protein is Phosphatidylglycerol--prolipoprotein diacylglyceryl transferase of Azoarcus sp. (strain BH72).